The primary structure comprises 365 residues: DNA replication and repair protein RecF (365 aa).

Residue 30–37 participates in ATP binding; the sequence is GLNAQGKT.

This sequence belongs to the RecF family.

The protein resides in the cytoplasm. The RecF protein is involved in DNA metabolism; it is required for DNA replication and normal SOS inducibility. RecF binds preferentially to single-stranded, linear DNA. It also seems to bind ATP. This is DNA replication and repair protein RecF from Chlamydia trachomatis serovar A (strain ATCC VR-571B / DSM 19440 / HAR-13).